The following is a 2212-amino-acid chain: Voltage-dependent P/Q-type calcium channel subunit alpha-1A (2212 aa).

The Cytoplasmic segment spans residues 1–100; the sequence is MARFGDEMPG…KYAKKITEWP (100 aa). One copy of the I repeat lies at 87-365; sequence NVVRKYAKKI…LVLGVLSGEF (279 aa). A helical membrane pass occupies residues 101–119; that stretch reads PFEYMILATIIANCIVLAL. At 120-138 the chain is on the extracellular side; that stretch reads EQHLPDDDKTPMSERLDDT. The helical transmembrane segment at 139–156 threads the bilayer; it reads EPYFIGIFCFEAGIKIVA. The Cytoplasmic portion of the chain corresponds to 157–168; that stretch reads LGFAFHKGSYLR. A helical membrane pass occupies residues 169–184; the sequence is NGWNVMDFVVVLTGIL. Residues 185-192 are Extracellular-facing; sequence ATVGTEFD. A helical transmembrane segment spans residues 193-211; it reads LRTLRAVRVLRPLKLVSGI. Residues 212–230 are Cytoplasmic-facing; the sequence is PSLQVVLKSIMKAMIPLLQ. A helical membrane pass occupies residues 231–250; that stretch reads IGLLLFFAILIFAIIGLEFY. Residues 251-337 are Extracellular-facing; sequence MGKFHTTCFE…NSNDASGNTW (87 aa). N285 is a glycosylation site (N-linked (GlcNAc...) asparagine). Residue E320 participates in Ca(2+) binding. Residues 338-362 traverse the membrane as a helical segment; the sequence is NWLYFIPLIIIGSFFMLNLVLGVLS. Residues 363–489 are Cytoplasmic-facing; it reads GEFAKERERV…FYIRRMVKTQ (127 aa). Residues 385–402 form a binding to the beta subunit region; the sequence is QQIERELNGYMEWISKAE. T411 is modified (phosphothreonine). S450 and S453 each carry phosphoserine. An II repeat occupies 475 to 719; the sequence is ERRMRFYIRR…VFLAIAVDNL (245 aa). A helical transmembrane segment spans residues 490 to 509; that stretch reads AFYWTVLSLVALNTLWLAIV. Topologically, residues 510–523 are extracellular; sequence HYNQPEWLSDFLYY. Residues 524–543 traverse the membrane as a helical segment; it reads AEFIFLGLFMSEMFIKMYGL. Residues 544–551 are Cytoplasmic-facing; the sequence is GTRPYFHS. The helical transmembrane segment at 552-570 threads the bilayer; it reads SFNCFDCGVIIGSIFEVIW. Residues 571 to 580 lie on the Extracellular side of the membrane; the sequence is AVIKPGTSFG. The helical transmembrane segment at 581-599 threads the bilayer; the sequence is ISVLRALRLLRIFKVTKYW. Residues 600 to 618 are Cytoplasmic-facing; sequence ASLRNLVVSLLNSMKSIIS. A helical membrane pass occupies residues 619–638; sequence LLFLLFLFIVVFALLGMQLF. The Extracellular portion of the chain corresponds to 639 to 691; sequence GGQFNFDEGTPPTNFDTFPAAIMTVFQILTGEDWNEVMYDEIKSQGGVQGGMV. E670 is a binding site for Ca(2+). The chain crosses the membrane as a helical span at residues 692-716; sequence FSIYFIVLTLFGNYTLLNVFLAIAV. Over 717 to 1190 the chain is Cytoplasmic; it reads DNLANAQELT…TNPLRRLCHY (474 aa). Residues S752, S755, and S792 each carry the phosphoserine modification. 4 stretches are compositionally biased toward basic and acidic residues: residues 814–824, 850–862, 871–924, and 932–958; these read PDVKTHLDRPL, RPRE…DARR, APGR…EGEP, and RPGD…RAAD. 2 disordered regions span residues 814 to 1117 and 1137 to 1170; these read PDVK…RKPE and VNKN…KPMP. 3 positions are modified to phosphoserine: S1038, S1042, and S1051. A compositionally biased stretch (polar residues) spans 1056–1073; sequence GNSTNPGPALATNPQNAA. The segment covering 1074 to 1083 has biased composition (low complexity); sequence SRRTPNNPGN. Residues 1094 to 1111 show a composition bias toward polar residues; the sequence is ENSLIVTNPSSTQPNSAK. A compositionally biased stretch (acidic residues) spans 1153 to 1163; that stretch reads KKEEEEADPGE. One copy of the III repeat lies at 1182 to 1465; the sequence is NPLRRLCHYI…IFVALIIITF (284 aa). Residues 1191–1214 form a helical membrane-spanning segment; the sequence is ILNLRYFEMCILMVIAMSSIALAA. Residues 1215 to 1231 lie on the Extracellular side of the membrane; sequence EDPVQPNAPRNNVLRYF. A helical transmembrane segment spans residues 1232 to 1251; the sequence is DYVFTGVFTFEMVIKMIDLG. Over 1252–1258 the chain is Cytoplasmic; the sequence is LVLHQGA. Residues 1259 to 1282 form a helical membrane-spanning segment; that stretch reads YFRDLWNILDFIVVSGALVAFAFT. Residues 1283-1293 lie on the Extracellular side of the membrane; sequence GNSKGKDINTI. The chain crosses the membrane as a helical span at residues 1294–1311; it reads KSLRVLRVLRPLKTIKRL. The Cytoplasmic portion of the chain corresponds to 1312–1330; sequence PKLKAVFDCVVNSLKNVFN. Residues 1331–1350 form a helical membrane-spanning segment; the sequence is ILIVYMLFMFIFAVVAVQLF. Residues 1351–1437 lie on the Extracellular side of the membrane; sequence KGKFFHCTDE…QGPSPGYRME (87 aa). A Ca(2+)-binding site is contributed by E1411. The chain crosses the membrane as a helical span at residues 1438–1462; the sequence is MSIFYVVYFVVFPFFFVNIFVALII. Topologically, residues 1463–1518 are cytoplasmic; it reads ITFQEQGDKMMEEYSLEKNERACIDFAISAKPLTRHMPQNKQSFQYRMWQFVVSPP. An IV repeat occupies 1502-1765; sequence NKQSFQYRMW…LFVAVIMDNF (264 aa). Residues 1519–1537 form a helical membrane-spanning segment; the sequence is FEYTIMAMIALNTIVLMMK. Residues 1538–1551 are Extracellular-facing; sequence FYGASVAYENALRV. Residues 1552–1573 form a helical membrane-spanning segment; sequence FNIVFTSLFSLECVLKVMAFGI. Over 1574-1580 the chain is Cytoplasmic; the sequence is LNYFRDA. A helical membrane pass occupies residues 1581 to 1600; it reads WNIFDFVTVLGSITDILVTE. Residues 1601-1607 lie on the Extracellular side of the membrane; that stretch reads FGNNFIN. N1607 carries an N-linked (GlcNAc...) asparagine glycan. A helical membrane pass occupies residues 1608–1626; sequence LSFLRLFRAARLIKLLRQG. The Cytoplasmic segment spans residues 1627–1645; sequence YTIRILLWTFVQSFKALPY. A helical transmembrane segment spans residues 1646–1665; sequence VCLLIAMLFFIYAIIGMQVF. Over 1666-1737 the chain is Extracellular; that stretch reads GNIGIDGEDE…IQKPECGNEF (72 aa). Residues 1738–1763 form a helical membrane-spanning segment; that stretch reads AYFYFVSFIFLCSFLMLNLFVAVIMD. The Cytoplasmic segment spans residues 1764-2212; that stretch reads NFEYLTRDSS…EGREHATHRQ (449 aa). The residue at position 1935 (T1935) is a Phosphothreonine. Positions 1940–2212 are disordered; the sequence is QRMEPPSPTQ…EGREHATHRQ (273 aa). 2 stretches are compositionally biased toward polar residues: residues 1948-1963 and 1972-1997; these read TQEG…STQL and QESS…TGTW. 6 positions are modified to phosphoserine: S1998, S2016, S2028, S2030, S2071, and S2091. Polar residues predominate over residues 2008-2017; the sequence is PNSQPNSQSV. A compositionally biased stretch (basic and acidic residues) spans 2018 to 2034; that stretch reads EMREMGTDGYSDSEHYL. Positions 2064 to 2073 are enriched in polar residues; that stretch reads LSTISDTSPM. 2 stretches are compositionally biased toward basic and acidic residues: residues 2085–2102 and 2143–2153; these read RRLD…ENQR and PSKDRDQDRGR. The segment covering 2154–2172 has biased composition (basic residues); the sequence is PKDRKHRPHHHHHHHHHHP. The segment covering 2173–2212 has biased composition (basic and acidic residues); the sequence is PAPDRERYAQERPDTGRARAREQRWSRSPSEGREHATHRQ.

The protein belongs to the calcium channel alpha-1 subunit (TC 1.A.1.11) family. CACNA1A subfamily. Voltage-dependent calcium channels are multisubunit complexes, consisting of alpha-1, alpha-2, beta and delta subunits in a 1:1:1:1 ratio. The channel activity is directed by the pore-forming and voltage-sensitive alpha-1 subunit. In many cases, this subunit is sufficient to generate voltage-sensitive calcium channel activity. The auxiliary subunits beta and alpha-2/delta linked by a disulfide bridge regulate the channel activity. Interacts (via C-terminal CDB motif) with CABP1 in the pre- and postsynaptic membranes. Interacts with the spider omega-agatoxin-IVA (AC P30288). Interacts with TSPOAP1. In terms of tissue distribution, brain specific. Purkinje cells contain predominantly P-type VSCC, the Q-type being a prominent calcium current in cerebellar granule cells. Also found in heart, in kidney distal convoluted tubule (DCT), and in pituitary.

The protein resides in the cell membrane. It carries out the reaction Ca(2+)(in) = Ca(2+)(out). Its function is as follows. Voltage-sensitive calcium channels (VSCC) mediate the entry of calcium ions into excitable cells and are also involved in a variety of calcium-dependent processes, including muscle contraction, hormone or neurotransmitter release, gene expression, cell motility, cell division and cell death. The isoform alpha-1A gives rise to P and/or Q-type calcium currents. P/Q-type calcium channels belong to the 'high-voltage activated' (HVA) group and are specifically blocked by the spider omega-agatoxin-IVA (AC P30288). They are however insensitive to dihydropyridines (DHP). The polypeptide is Voltage-dependent P/Q-type calcium channel subunit alpha-1A (Rattus norvegicus (Rat)).